The primary structure comprises 235 residues: Regulator of G-protein signaling 18 (235 aa).

The residue at position 49 (Ser49) is a Phosphoserine. The region spanning 86 to 202 (SFDKLLSHRD…LKSDIYLDLM (117 aa)) is the RGS domain. 2 positions are modified to phosphoserine: Ser216 and Ser218.

Expressed in peripheral leukocytes, bone marrow, platelet, spleen and fetal liver.

Its subcellular location is the cytoplasm. Its function is as follows. Inhibits signal transduction by increasing the GTPase activity of G protein alpha subunits thereby driving them into their inactive GDP-bound form. Binds to G(i) alpha-1, G(i) alpha-2, G(i) alpha-3 and G(q) alpha. The protein is Regulator of G-protein signaling 18 (RGS18) of Homo sapiens (Human).